The sequence spans 719 residues: Polyribonucleotide nucleotidyltransferase (719 aa).

2 residues coordinate Mg(2+): D507 and D513. Residues 573–633 (PKLELFSVDP…EQIKAAKDYI (61 aa)) enclose the KH domain. An S1 motif domain is found at 658 to 719 (GQEFQGIVKK…NGKISVDLCE (62 aa)).

This sequence belongs to the polyribonucleotide nucleotidyltransferase family. The cofactor is Mg(2+).

It localises to the cytoplasm. The enzyme catalyses RNA(n+1) + phosphate = RNA(n) + a ribonucleoside 5'-diphosphate. In terms of biological role, involved in mRNA degradation. Catalyzes the phosphorolysis of single-stranded polyribonucleotides processively in the 3'- to 5'-direction. The protein is Polyribonucleotide nucleotidyltransferase of Campylobacter jejuni (strain RM1221).